The sequence spans 163 residues: uncharacterized protein (163 aa).

This sequence belongs to the LcrH/SycD chaperone family.

This is an uncharacterized protein from Escherichia coli (strain K12).